The primary structure comprises 70 residues: Putative ankyrin repeat protein RC0502 (70 aa).

The stretch at 9–43 (KGRIPIHYATYSKQHEITQILILLQPGSEIDTVDN) is one ANK repeat.

This Rickettsia conorii (strain ATCC VR-613 / Malish 7) protein is Putative ankyrin repeat protein RC0502.